Reading from the N-terminus, the 835-residue chain is Protein translocase subunit SecA (835 aa).

Residues glutamine 85, 103–107 (GEGKT), and aspartate 492 each bind ATP. Positions 788-807 (VQGEAVHPSSDGEEAKKKPV) are disordered. Residues cysteine 819, cysteine 821, cysteine 830, and cysteine 831 each coordinate Zn(2+).

The protein belongs to the SecA family. Monomer and homodimer. Part of the essential Sec protein translocation apparatus which comprises SecA, SecYEG and auxiliary proteins SecDF. Other proteins may also be involved. The cofactor is Zn(2+).

It is found in the cell membrane. The protein localises to the cytoplasm. It catalyses the reaction ATP + H2O + cellular proteinSide 1 = ADP + phosphate + cellular proteinSide 2.. Part of the Sec protein translocase complex. Interacts with the SecYEG preprotein conducting channel. Has a central role in coupling the hydrolysis of ATP to the transfer of proteins into and across the cell membrane, serving as an ATP-driven molecular motor driving the stepwise translocation of polypeptide chains across the membrane. This is Protein translocase subunit SecA from Bacillus cereus (strain B4264).